We begin with the raw amino-acid sequence, 322 residues long: MSSLEQLKATGTVVVSDTGDFESIAKYKPQDATTNPSLILAASKKPQYAALVDAAVDYAKAKGGSINSQIEIAFDRLLIEFGTKILAIVPGRVSTEVDARYSFDTQTTIEKARHLIKLYEAEGIGRERVLIKIASTYEGIQAAKQLEEEGIHCNLTLLFSFVQAVACAEANVTLISPFVGRILDFYKAKNNRDYTAQEDPGVVSVSNIFNYYKKFGYKTIVMGASFRNVGEIKELAGVDFLTISPALLEQLNNSTDAVPKKLDASKASSLNLEKVSYLTDEPKFRFDFNNDEMAVVKLSTGIAAFAKDADTLRTILKAKLEA.

Lysine 132 serves as the catalytic Schiff-base intermediate with substrate. Serine 268 and serine 269 each carry phosphoserine.

It belongs to the transaldolase family. Type 1 subfamily. As to quaternary structure, homodimer.

The catalysed reaction is D-sedoheptulose 7-phosphate + D-glyceraldehyde 3-phosphate = D-erythrose 4-phosphate + beta-D-fructose 6-phosphate. It functions in the pathway carbohydrate degradation; pentose phosphate pathway; D-glyceraldehyde 3-phosphate and beta-D-fructose 6-phosphate from D-ribose 5-phosphate and D-xylulose 5-phosphate (non-oxidative stage): step 2/3. Its function is as follows. Transaldolase is important for the balance of metabolites in the pentose-phosphate pathway. The polypeptide is Transaldolase (tal1) (Schizosaccharomyces pombe (strain 972 / ATCC 24843) (Fission yeast)).